We begin with the raw amino-acid sequence, 841 residues long: DNA ligase (841 aa).

Residues 33-37, 82-83, and Glu114 each bind NAD(+); these read DAQYD and SL. Lys116 (N6-AMP-lysine intermediate) is an active-site residue. 4 residues coordinate NAD(+): Arg137, Glu174, Lys300, and Lys324. 4 residues coordinate Zn(2+): Cys418, Cys421, Cys436, and Cys442. The region spanning 758–841 is the BRCT domain; the sequence is EKTGPLDGQT…AFLGEHGQQR (84 aa).

The protein belongs to the NAD-dependent DNA ligase family. LigA subfamily. It depends on Mg(2+) as a cofactor. The cofactor is Mn(2+).

It carries out the reaction NAD(+) + (deoxyribonucleotide)n-3'-hydroxyl + 5'-phospho-(deoxyribonucleotide)m = (deoxyribonucleotide)n+m + AMP + beta-nicotinamide D-nucleotide.. Its function is as follows. DNA ligase that catalyzes the formation of phosphodiester linkages between 5'-phosphoryl and 3'-hydroxyl groups in double-stranded DNA using NAD as a coenzyme and as the energy source for the reaction. It is essential for DNA replication and repair of damaged DNA. The sequence is that of DNA ligase from Xanthomonas oryzae pv. oryzae (strain MAFF 311018).